A 92-amino-acid chain; its full sequence is Small ribosomal subunit protein uS17 (92 aa).

This sequence belongs to the universal ribosomal protein uS17 family. Part of the 30S ribosomal subunit.

One of the primary rRNA binding proteins, it binds specifically to the 5'-end of 16S ribosomal RNA. This Corynebacterium urealyticum (strain ATCC 43042 / DSM 7109) protein is Small ribosomal subunit protein uS17.